Reading from the N-terminus, the 126-residue chain is S-adenosylmethionine decarboxylase proenzyme (126 aa).

The active-site Schiff-base intermediate with substrate; via pyruvic acid is Ser63. The residue at position 63 (Ser63) is a Pyruvic acid (Ser); by autocatalysis. His68 acts as the Proton acceptor; for processing activity in catalysis. Cys83 (proton donor; for catalytic activity) is an active-site residue.

The protein belongs to the prokaryotic AdoMetDC family. Type 1 subfamily. In terms of assembly, heterotetramer of two alpha and two beta chains arranged as a dimer of alpha/beta heterodimers. Pyruvate serves as cofactor. Post-translationally, is synthesized initially as an inactive proenzyme. Formation of the active enzyme involves a self-maturation process in which the active site pyruvoyl group is generated from an internal serine residue via an autocatalytic post-translational modification. Two non-identical subunits are generated from the proenzyme in this reaction, and the pyruvate is formed at the N-terminus of the alpha chain, which is derived from the carboxyl end of the proenzyme. The post-translation cleavage follows an unusual pathway, termed non-hydrolytic serinolysis, in which the side chain hydroxyl group of the serine supplies its oxygen atom to form the C-terminus of the beta chain, while the remainder of the serine residue undergoes an oxidative deamination to produce ammonia and the pyruvoyl group blocking the N-terminus of the alpha chain.

The catalysed reaction is S-adenosyl-L-methionine + H(+) = S-adenosyl 3-(methylsulfanyl)propylamine + CO2. It participates in amine and polyamine biosynthesis; S-adenosylmethioninamine biosynthesis; S-adenosylmethioninamine from S-adenosyl-L-methionine: step 1/1. Catalyzes the decarboxylation of S-adenosylmethionine to S-adenosylmethioninamine (dcAdoMet), the propylamine donor required for the synthesis of the polyamines spermine and spermidine from the diamine putrescine. The chain is S-adenosylmethionine decarboxylase proenzyme from Clostridium kluyveri (strain NBRC 12016).